The chain runs to 411 residues: 1-deoxy-D-xylulose 5-phosphate reductoisomerase (411 aa).

NADPH contacts are provided by Thr12, Gly13, Ser14, Ile15, and Asn127. A 1-deoxy-D-xylulose 5-phosphate-binding site is contributed by Lys128. Glu129 is a binding site for NADPH. A Mn(2+)-binding site is contributed by Asp153. 4 residues coordinate 1-deoxy-D-xylulose 5-phosphate: Ser154, Glu155, Ser189, and His212. Mn(2+) is bound at residue Glu155. Gly218 contacts NADPH. 1-deoxy-D-xylulose 5-phosphate contacts are provided by Ser225, Asn230, Lys231, and Glu234. Glu234 lines the Mn(2+) pocket.

It belongs to the DXR family. Requires Mg(2+) as cofactor. Mn(2+) serves as cofactor.

It catalyses the reaction 2-C-methyl-D-erythritol 4-phosphate + NADP(+) = 1-deoxy-D-xylulose 5-phosphate + NADPH + H(+). Its pathway is isoprenoid biosynthesis; isopentenyl diphosphate biosynthesis via DXP pathway; isopentenyl diphosphate from 1-deoxy-D-xylulose 5-phosphate: step 1/6. Its function is as follows. Catalyzes the NADPH-dependent rearrangement and reduction of 1-deoxy-D-xylulose-5-phosphate (DXP) to 2-C-methyl-D-erythritol 4-phosphate (MEP). The protein is 1-deoxy-D-xylulose 5-phosphate reductoisomerase of Colwellia psychrerythraea (strain 34H / ATCC BAA-681) (Vibrio psychroerythus).